The following is a 205-amino-acid chain: Probable thymidylate kinase (205 aa).

9–16 (GIDGVGKS) contributes to the ATP binding site.

This sequence belongs to the thymidylate kinase family.

It catalyses the reaction dTMP + ATP = dTDP + ADP. The polypeptide is Probable thymidylate kinase (Caldivirga maquilingensis (strain ATCC 700844 / DSM 13496 / JCM 10307 / IC-167)).